A 334-amino-acid chain; its full sequence is Holliday junction branch migration complex subunit RuvB (334 aa).

A large ATPase domain (RuvB-L) region spans residues A4–Y184. Residues I23, R24, G65, K68, T69, T70, E131 to Y133, R174, Y184, and R221 contribute to the ATP site. A Mg(2+)-binding site is contributed by T69. The interval Q185–D255 is small ATPAse domain (RuvB-S). Residues A258–E334 are head domain (RuvB-H). Positions 294, 313, and 318 each coordinate DNA.

It belongs to the RuvB family. Homohexamer. Forms an RuvA(8)-RuvB(12)-Holliday junction (HJ) complex. HJ DNA is sandwiched between 2 RuvA tetramers; dsDNA enters through RuvA and exits via RuvB. An RuvB hexamer assembles on each DNA strand where it exits the tetramer. Each RuvB hexamer is contacted by two RuvA subunits (via domain III) on 2 adjacent RuvB subunits; this complex drives branch migration. In the full resolvosome a probable DNA-RuvA(4)-RuvB(12)-RuvC(2) complex forms which resolves the HJ.

It is found in the cytoplasm. The enzyme catalyses ATP + H2O = ADP + phosphate + H(+). The RuvA-RuvB-RuvC complex processes Holliday junction (HJ) DNA during genetic recombination and DNA repair, while the RuvA-RuvB complex plays an important role in the rescue of blocked DNA replication forks via replication fork reversal (RFR). RuvA specifically binds to HJ cruciform DNA, conferring on it an open structure. The RuvB hexamer acts as an ATP-dependent pump, pulling dsDNA into and through the RuvAB complex. RuvB forms 2 homohexamers on either side of HJ DNA bound by 1 or 2 RuvA tetramers; 4 subunits per hexamer contact DNA at a time. Coordinated motions by a converter formed by DNA-disengaged RuvB subunits stimulates ATP hydrolysis and nucleotide exchange. Immobilization of the converter enables RuvB to convert the ATP-contained energy into a lever motion, pulling 2 nucleotides of DNA out of the RuvA tetramer per ATP hydrolyzed, thus driving DNA branch migration. The RuvB motors rotate together with the DNA substrate, which together with the progressing nucleotide cycle form the mechanistic basis for DNA recombination by continuous HJ branch migration. Branch migration allows RuvC to scan DNA until it finds its consensus sequence, where it cleaves and resolves cruciform DNA. In Edwardsiella ictaluri (strain 93-146), this protein is Holliday junction branch migration complex subunit RuvB.